The primary structure comprises 146 residues: Large ribosomal subunit protein uL16 (146 aa).

It belongs to the universal ribosomal protein uL16 family. As to quaternary structure, part of the 50S ribosomal subunit.

Binds 23S rRNA and is also seen to make contacts with the A and possibly P site tRNAs. This Caulobacter sp. (strain K31) protein is Large ribosomal subunit protein uL16.